A 346-amino-acid chain; its full sequence is Uroporphyrinogen decarboxylase (346 aa).

Residues 21 to 25 (RQAGR), aspartate 71, tyrosine 146, serine 201, and histidine 316 contribute to the substrate site.

This sequence belongs to the uroporphyrinogen decarboxylase family. In terms of assembly, homodimer.

It localises to the cytoplasm. It catalyses the reaction uroporphyrinogen III + 4 H(+) = coproporphyrinogen III + 4 CO2. Its pathway is porphyrin-containing compound metabolism; protoporphyrin-IX biosynthesis; coproporphyrinogen-III from 5-aminolevulinate: step 4/4. Functionally, catalyzes the decarboxylation of four acetate groups of uroporphyrinogen-III to yield coproporphyrinogen-III. The sequence is that of Uroporphyrinogen decarboxylase from Rickettsia rickettsii (strain Iowa).